Reading from the N-terminus, the 275-residue chain is Large ribosomal subunit protein uL2 (275 aa).

Disordered regions lie at residues 35–55 (EKQT…RHKG) and 223–260 (VAMN…KTRN). The segment covering 39-49 (RSSGRNNQGRV) has biased composition (polar residues).

The protein belongs to the universal ribosomal protein uL2 family. In terms of assembly, part of the 50S ribosomal subunit. Forms a bridge to the 30S subunit in the 70S ribosome.

Its function is as follows. One of the primary rRNA binding proteins. Required for association of the 30S and 50S subunits to form the 70S ribosome, for tRNA binding and peptide bond formation. It has been suggested to have peptidyltransferase activity; this is somewhat controversial. Makes several contacts with the 16S rRNA in the 70S ribosome. This Methylococcus capsulatus (strain ATCC 33009 / NCIMB 11132 / Bath) protein is Large ribosomal subunit protein uL2.